Reading from the N-terminus, the 647-residue chain is Acetyl-coenzyme A synthetase (647 aa).

CoA is bound by residues 190 to 193, Thr310, and Asn334; that span reads RGGK. Residues 386 to 388, 410 to 415, Asp499, and Arg514 each bind ATP; these read GEP and DTWWQT. Residue Ser522 coordinates CoA. Residue Arg525 coordinates ATP. Residues Val536, His538, and Val541 each coordinate Mg(2+). Position 583 (Arg583) interacts with CoA. An N6-acetyllysine modification is found at Lys608.

The protein belongs to the ATP-dependent AMP-binding enzyme family. Mg(2+) is required as a cofactor. Acetylated. Deacetylation by the SIR2-homolog deacetylase activates the enzyme.

The enzyme catalyses acetate + ATP + CoA = acetyl-CoA + AMP + diphosphate. Catalyzes the conversion of acetate into acetyl-CoA (AcCoA), an essential intermediate at the junction of anabolic and catabolic pathways. AcsA undergoes a two-step reaction. In the first half reaction, AcsA combines acetate with ATP to form acetyl-adenylate (AcAMP) intermediate. In the second half reaction, it can then transfer the acetyl group from AcAMP to the sulfhydryl group of CoA, forming the product AcCoA. In Xanthomonas oryzae pv. oryzae (strain MAFF 311018), this protein is Acetyl-coenzyme A synthetase.